A 364-amino-acid chain; its full sequence is Fructose-bisphosphate aldolase C (364 aa).

Tyrosine 5 bears the Phosphotyrosine mark. Residues serine 36, serine 39, and serine 45 each carry the phosphoserine modification. Arginine 56 lines the substrate pocket. Lysine 111 carries the post-translational modification N6-acetyllysine. Position 132 is a phosphoserine (serine 132). Lysine 147 provides a ligand contact to substrate. Residue glutamate 188 is the Proton acceptor of the active site. The active-site Schiff-base intermediate with dihydroxyacetone-P is lysine 230.

It belongs to the class I fructose-bisphosphate aldolase family. Homotetramer. Interacts with ATP6V1E1.

It carries out the reaction beta-D-fructose 1,6-bisphosphate = D-glyceraldehyde 3-phosphate + dihydroxyacetone phosphate. Its pathway is carbohydrate degradation; glycolysis; D-glyceraldehyde 3-phosphate and glycerone phosphate from D-glucose: step 4/4. The chain is Fructose-bisphosphate aldolase C (ALDOC) from Macaca fascicularis (Crab-eating macaque).